A 304-amino-acid chain; its full sequence is UTP--glucose-1-phosphate uridylyltransferase 1 (304 aa).

This sequence belongs to the UDPGP type 2 family.

It carries out the reaction alpha-D-glucose 1-phosphate + UTP + H(+) = UDP-alpha-D-glucose + diphosphate. It participates in carbohydrate metabolism; nucleotide-sugar metabolism. The polypeptide is UTP--glucose-1-phosphate uridylyltransferase 1 (hasC1) (Streptococcus pyogenes serotype M3 (strain ATCC BAA-595 / MGAS315)).